We begin with the raw amino-acid sequence, 390 residues long: Lipid-A-disaccharide synthase (390 aa).

It belongs to the LpxB family.

The enzyme catalyses a lipid X + a UDP-2-N,3-O-bis[(3R)-3-hydroxyacyl]-alpha-D-glucosamine = a lipid A disaccharide + UDP + H(+). It participates in bacterial outer membrane biogenesis; LPS lipid A biosynthesis. Condensation of UDP-2,3-diacylglucosamine and 2,3-diacylglucosamine-1-phosphate to form lipid A disaccharide, a precursor of lipid A, a phosphorylated glycolipid that anchors the lipopolysaccharide to the outer membrane of the cell. This chain is Lipid-A-disaccharide synthase, found in Haemophilus ducreyi (strain 35000HP / ATCC 700724).